The sequence spans 230 residues: Sugar fermentation stimulation protein homolog (230 aa).

It belongs to the SfsA family.

This chain is Sugar fermentation stimulation protein homolog, found in Clostridium botulinum (strain Alaska E43 / Type E3).